Here is a 183-residue protein sequence, read N- to C-terminus: MSGGVGVGKRLCCIALVMRAFWYLSAKGVSIAYVPVHRSGGSQDSSMSTAVGDTLLNAFFDEGMVVTAVPPGVHDGQTIAEIAACFEVMPDYALLVQFHSARLPGGESPTSRARGAWSSERFRAVWTLVDLHTQRACVYACVAPYRESIPVSECVDVVTRCIAEQAISYIRVGTSTDTAGVQL.

This is an uncharacterized protein from Treponema pallidum (strain Nichols).